The chain runs to 781 residues: Lon protease (781 aa).

The 199-residue stretch at 16 to 214 (ANVLVTRGIV…KILSFTIDER (199 aa)) folds into the Lon N-terminal domain. Position 365 to 372 (365 to 372 (GPPGVGKT)) interacts with ATP. Residues 601–781 (EYMPGVVNGM…YDDVYNRLFK (181 aa)) enclose the Lon proteolytic domain. Active-site residues include serine 688 and lysine 731.

This sequence belongs to the peptidase S16 family. In terms of assembly, homohexamer. Organized in a ring with a central cavity.

It localises to the cytoplasm. It catalyses the reaction Hydrolysis of proteins in presence of ATP.. In terms of biological role, ATP-dependent serine protease that mediates the selective degradation of mutant and abnormal proteins as well as certain short-lived regulatory proteins. Required for cellular homeostasis and for survival from DNA damage and developmental changes induced by stress. Degrades polypeptides processively to yield small peptide fragments that are 5 to 10 amino acids long. Binds to DNA in a double-stranded, site-specific manner. This Malacoplasma penetrans (strain HF-2) (Mycoplasma penetrans) protein is Lon protease.